A 239-amino-acid polypeptide reads, in one-letter code: 2,3,4,5-tetrahydropyridine-2,6-dicarboxylate N-acetyltransferase (239 aa).

The protein belongs to the transferase hexapeptide repeat family. DapH subfamily.

It carries out the reaction (S)-2,3,4,5-tetrahydrodipicolinate + acetyl-CoA + H2O = L-2-acetamido-6-oxoheptanedioate + CoA. It functions in the pathway amino-acid biosynthesis; L-lysine biosynthesis via DAP pathway; LL-2,6-diaminopimelate from (S)-tetrahydrodipicolinate (acetylase route): step 1/3. Catalyzes the transfer of an acetyl group from acetyl-CoA to tetrahydrodipicolinate. The sequence is that of 2,3,4,5-tetrahydropyridine-2,6-dicarboxylate N-acetyltransferase from Staphylococcus saprophyticus subsp. saprophyticus (strain ATCC 15305 / DSM 20229 / NCIMB 8711 / NCTC 7292 / S-41).